The following is a 100-amino-acid chain: Urease subunit gamma (100 aa).

This sequence belongs to the urease gamma subunit family. Heterotrimer of UreA (gamma), UreB (beta) and UreC (alpha) subunits. Three heterotrimers associate to form the active enzyme.

It localises to the cytoplasm. The catalysed reaction is urea + 2 H2O + H(+) = hydrogencarbonate + 2 NH4(+). It participates in nitrogen metabolism; urea degradation; CO(2) and NH(3) from urea (urease route): step 1/1. The chain is Urease subunit gamma from Rhizobium meliloti (strain 1021) (Ensifer meliloti).